We begin with the raw amino-acid sequence, 134 residues long: Profilin-4 (134 aa).

Belongs to the profilin family. In terms of assembly, occurs in many kinds of cells as a complex with monomeric actin in a 1:1 ratio. Specifically expressed in mature and germinating pollen grains, and growing pollen tubes (at protein level).

It is found in the cytoplasm. The protein localises to the cytoskeleton. Its function is as follows. Binds to actin monomers and regulates the organization of the actin cytoskeleton. At high concentrations, profilin prevents the polymerization of actin, whereas it enhances it at low concentrations. At low concentrations, associates with the poly-proline motif of formins to enhance actin filament elongation rate. Acts redundantly with PRF5 to regulate apical actin polymerization at the tip of pollen tube and control polarized pollen tube growth. Functions probably by favoring formin-mediated actin polymerization at pollen tube tips. The protein is Profilin-4 of Arabidopsis thaliana (Mouse-ear cress).